The following is a 252-amino-acid chain: CLAVATA3/ESR (CLE)-related protein 4A-1 (252 aa).

Positions 1–21 (MAKNAMLCLLILRVVLALAFA) are cleaved as a signal peptide. Residues 21 to 83 (ATNKKGDEEP…SNQLPNNNWM (63 aa)) are required for secretion from the host cytoplasm to the host apoplasm. Asparagine 32 is a glycosylation site (N-linked (GlcNAc...) asparagine). Residues 116-252 (RKTGMHSQRH…APAGPDPIHH (137 aa)) are disordered. Composition is skewed to basic and acidic residues over residues 125–137 (HHEE…EKRV) and 144–242 (PIHH…EKRG). The A-1 repeat unit spans residues 127–135 (EETTLEQEK). The interval 127–219 (EETTLEQEKR…HEETTLEQEK (93 aa)) is 6 X approximate repeat A. The CLE-1 repeat unit spans residues 136 to 147 (RVAGAGPDPIHH). The interval 136-252 (RVAGAGPDPI…APAGPDPIHH (117 aa)) is 6 X approximate repeat CLE. An A-2 repeat occupies 148–156 (QDTTLEQEK). One copy of the CLE-2 repeat lies at 157-168 (RAVPAGPDPKHH). The stretch at 169 to 177 (EETTLEQEK) is one A-3 repeat. The CLE-3 repeat unit spans residues 178 to 189 (RAVPAGPDPKHH). An A-4 repeat occupies 190–198 (EETTLEQEK). The stretch at 199–210 (RAVPAGPDPKHH) is one CLE-4 repeat. One copy of the A-5 repeat lies at 211–219 (EETTLEQEK). Residues 220–231 (RAVPAGPDPKHH) form a CLE-5 repeat. One copy of the A-6 repeat lies at 232–240 (EETTFEQEK). One copy of the CLE-6 repeat lies at 241-252 (RGAPAGPDPIHH).

The protein belongs to the CLV3/ESR signal peptide family. As to expression, highly expressed exclusively within the dorsal esophageal gland cell during syncytium formation in host plants.

Its subcellular location is the secreted. The protein localises to the host cytoplasm. It localises to the host extracellular space. The protein resides in the extracellular space. It is found in the apoplast. Its function is as follows. Mimics host plant CLE extracellular signal peptides that regulate cell fate. May play a role in the differentiation or division of feeding cells (syncytia) induced in plant roots during infection. This chain is CLAVATA3/ESR (CLE)-related protein 4A-1 (CLE-4A-1), found in Globodera rostochiensis (Golden nematode worm).